A 103-amino-acid polypeptide reads, in one-letter code: Large ribosomal subunit protein bL21 (103 aa).

Belongs to the bacterial ribosomal protein bL21 family. In terms of assembly, part of the 50S ribosomal subunit. Contacts protein L20.

This protein binds to 23S rRNA in the presence of protein L20. This is Large ribosomal subunit protein bL21 from Dechloromonas aromatica (strain RCB).